The sequence spans 342 residues: Ribosomal RNA small subunit methyltransferase C (342 aa).

It belongs to the methyltransferase superfamily. RsmC family. As to quaternary structure, monomer.

It is found in the cytoplasm. The catalysed reaction is guanosine(1207) in 16S rRNA + S-adenosyl-L-methionine = N(2)-methylguanosine(1207) in 16S rRNA + S-adenosyl-L-homocysteine + H(+). Specifically methylates the guanine in position 1207 of 16S rRNA in the 30S particle. The protein is Ribosomal RNA small subunit methyltransferase C of Salmonella newport (strain SL254).